The following is a 236-amino-acid chain: MTAKSKTSTSEGAPGAVWFRPEKQSRTKPLLTQDKIVSAAVELLDRDGVRQLSMRKLADRLQAHATSLYWHVSTKDDVLDLALDAVFGEVRLPVESGPSWRDDIIAFMAELRRVLLDHPWAAALASTRPLAGPNALARSEFVYAALAAAGFGRADVLAAGAAVSNYVIGSVSAESVWRHQDEAGTRSALAEHLRAREADYPALAGNFPADGGDWQAHFDRGAQYLVAGMAATAGLE.

Residues 30 to 90 (LLTQDKIVSA…LALDAVFGEV (61 aa)) form the HTH tetR-type domain. The H-T-H motif DNA-binding region spans 53–72 (SMRKLADRLQAHATSLYWHV).

Its function is as follows. Transcriptional regulator that inhibits erythromycin production. Directly represses the expression of SACE_5813, eryAI (encoding polyketide synthase I) and ermE (encoding rRNA methyltransferase), suggesting its direct regulation of the erythromycin biosynthesis gene cluster. May play an important role in regulating secondary metabolism in actinomycetes. The polypeptide is HTH-type transcriptional regulator SACE_5812 (Saccharopolyspora erythraea (strain ATCC 11635 / DSM 40517 / JCM 4748 / NBRC 13426 / NCIMB 8594 / NRRL 2338)).